The chain runs to 418 residues: Light-independent protochlorophyllide reductase subunit N (418 aa).

Positions 17, 42, and 103 each coordinate [4Fe-4S] cluster.

It belongs to the BchN/ChlN family. In terms of assembly, protochlorophyllide reductase is composed of three subunits; ChlL, ChlN and ChlB. Forms a heterotetramer of two ChlB and two ChlN subunits. [4Fe-4S] cluster is required as a cofactor.

It catalyses the reaction chlorophyllide a + oxidized 2[4Fe-4S]-[ferredoxin] + 2 ADP + 2 phosphate = protochlorophyllide a + reduced 2[4Fe-4S]-[ferredoxin] + 2 ATP + 2 H2O. The protein operates within porphyrin-containing compound metabolism; chlorophyll biosynthesis (light-independent). Component of the dark-operative protochlorophyllide reductase (DPOR) that uses Mg-ATP and reduced ferredoxin to reduce ring D of protochlorophyllide (Pchlide) to form chlorophyllide a (Chlide). This reaction is light-independent. The NB-protein (ChlN-ChlB) is the catalytic component of the complex. The protein is Light-independent protochlorophyllide reductase subunit N of Prochlorococcus marinus subsp. pastoris (strain CCMP1986 / NIES-2087 / MED4).